Consider the following 239-residue polypeptide: Purine nucleoside phosphorylase DeoD-type (239 aa).

Histidine 5 contributes to the a purine D-ribonucleoside binding site. Positions 21 and 25 each coordinate phosphate. At lysine 27 the chain carries N6-acetyllysine. Phosphate-binding positions include arginine 44 and 88–91 (RVGS). Residues 180–182 (EME) and 204–205 (SD) each bind a purine D-ribonucleoside. Residue aspartate 205 is the Proton donor of the active site.

It belongs to the PNP/UDP phosphorylase family. As to quaternary structure, homohexamer; trimer of homodimers.

It catalyses the reaction a purine D-ribonucleoside + phosphate = a purine nucleobase + alpha-D-ribose 1-phosphate. It carries out the reaction a purine 2'-deoxy-D-ribonucleoside + phosphate = a purine nucleobase + 2-deoxy-alpha-D-ribose 1-phosphate. Its function is as follows. Catalyzes the reversible phosphorolytic breakdown of the N-glycosidic bond in the beta-(deoxy)ribonucleoside molecules, with the formation of the corresponding free purine bases and pentose-1-phosphate. In Shigella dysenteriae serotype 1 (strain Sd197), this protein is Purine nucleoside phosphorylase DeoD-type.